We begin with the raw amino-acid sequence, 177 residues long: Large ribosomal subunit protein uL6 (177 aa).

This sequence belongs to the universal ribosomal protein uL6 family. As to quaternary structure, part of the 50S ribosomal subunit.

Its function is as follows. This protein binds to the 23S rRNA, and is important in its secondary structure. It is located near the subunit interface in the base of the L7/L12 stalk, and near the tRNA binding site of the peptidyltransferase center. The protein is Large ribosomal subunit protein uL6 of Shewanella denitrificans (strain OS217 / ATCC BAA-1090 / DSM 15013).